The sequence spans 844 residues: Elongation factor 2 (844 aa).

Positions 17–255 constitute a tr-type G domain; it reads TNVRNMSVIA…LWGDNYFNPK (239 aa). 26–33 lines the GTP pocket; that stretch reads AHVDHGKS. 2 positions are modified to phosphothreonine: Thr57 and Thr59. GTP contacts are provided by residues 160-163 and 215-217; these read NKVD and SGL. The residue at position 700 (His700) is a Diphthamide.

The protein belongs to the TRAFAC class translation factor GTPase superfamily. Classic translation factor GTPase family. EF-G/EF-2 subfamily.

It is found in the cytoplasm. It catalyses the reaction GTP + H2O = GDP + phosphate + H(+). In terms of biological role, catalyzes the GTP-dependent ribosomal translocation step during translation elongation. During this step, the ribosome changes from the pre-translocational (PRE) to the post-translocational (POST) state as the newly formed A-site-bound peptidyl-tRNA and P-site-bound deacylated tRNA move to the P and E sites, respectively. Catalyzes the coordinated movement of the two tRNA molecules, the mRNA and conformational changes in the ribosome. The chain is Elongation factor 2 (cot-3) from Neurospora crassa (strain ATCC 24698 / 74-OR23-1A / CBS 708.71 / DSM 1257 / FGSC 987).